We begin with the raw amino-acid sequence, 1213 residues long: DNA-directed RNA polymerase subunit beta' (1213 aa).

Zn(2+) contacts are provided by cysteine 60, cysteine 62, cysteine 75, and cysteine 78. The Mg(2+) site is built by aspartate 450, aspartate 452, and aspartate 454. Zn(2+) is bound by residues cysteine 819, cysteine 893, cysteine 900, and cysteine 903.

It belongs to the RNA polymerase beta' chain family. The RNAP catalytic core consists of 2 alpha, 1 beta, 1 beta' and 1 omega subunit. When a sigma factor is associated with the core the holoenzyme is formed, which can initiate transcription. The cofactor is Mg(2+). It depends on Zn(2+) as a cofactor.

The enzyme catalyses RNA(n) + a ribonucleoside 5'-triphosphate = RNA(n+1) + diphosphate. DNA-dependent RNA polymerase catalyzes the transcription of DNA into RNA using the four ribonucleoside triphosphates as substrates. The chain is DNA-directed RNA polymerase subunit beta' from Streptococcus pyogenes serotype M1.